The chain runs to 262 residues: Adenosylcobinamide-GDP ribazoletransferase (262 aa).

6 helical membrane-spanning segments follow: residues 11 to 31, 43 to 63, 66 to 86, 121 to 141, 146 to 166, and 199 to 219; these read LNLFFVATGFFTRLPTPSWVI, YFGLVGLLIGLICALVYWFTQ, LPTSVAVLLAMVAGVLVTGGF, AIVLALILLLRWQLLVELALF, AITGFIVAHTLSRVLAASLIF, and IFVLFWLNGLAAFVLFISLWA.

It belongs to the CobS family. The cofactor is Mg(2+).

Its subcellular location is the cell inner membrane. It carries out the reaction alpha-ribazole + adenosylcob(III)inamide-GDP = adenosylcob(III)alamin + GMP + H(+). The catalysed reaction is alpha-ribazole 5'-phosphate + adenosylcob(III)inamide-GDP = adenosylcob(III)alamin 5'-phosphate + GMP + H(+). The protein operates within cofactor biosynthesis; adenosylcobalamin biosynthesis; adenosylcobalamin from cob(II)yrinate a,c-diamide: step 7/7. In terms of biological role, joins adenosylcobinamide-GDP and alpha-ribazole to generate adenosylcobalamin (Ado-cobalamin). Also synthesizes adenosylcobalamin 5'-phosphate from adenosylcobinamide-GDP and alpha-ribazole 5'-phosphate. The sequence is that of Adenosylcobinamide-GDP ribazoletransferase from Shewanella denitrificans (strain OS217 / ATCC BAA-1090 / DSM 15013).